Consider the following 221-residue polypeptide: GTP cyclohydrolase 1 (221 aa).

Positions 109, 112, and 180 each coordinate Zn(2+).

Belongs to the GTP cyclohydrolase I family. In terms of assembly, toroid-shaped homodecamer, composed of two pentamers of five dimers.

It carries out the reaction GTP + H2O = 7,8-dihydroneopterin 3'-triphosphate + formate + H(+). The protein operates within cofactor biosynthesis; 7,8-dihydroneopterin triphosphate biosynthesis; 7,8-dihydroneopterin triphosphate from GTP: step 1/1. This Blochmanniella pennsylvanica (strain BPEN) protein is GTP cyclohydrolase 1.